The sequence spans 286 residues: MDIFLAVLPAIFWGSIVLFNVKLGGGPYSQTLGTTLGALIFSIGIYIFVHPTFTPLIFGVGVVSGLFWAVGQSNQLKSIDLIGVSKTMPISTGLQLVSTSLFGVIVFHEWSTKTSIILGVLALIFIIVGIVLASLQSKEEKEAEEGKGNFKKGIVILLISTVGYLVYVVVARLFNVDGWSALLPQAIGMVIGGVLLTFKHKPFNKYAIRNIIPGLIWAAGNMFLFISQPKVGVATSFSLSQMGIVISTLGGIIILGEKKTKRQLVGIIIGIILIIIAGVMLGLAKS.

10 helical membrane passes run 4-21 (FLAVLPAIFWGSIVLFNV), 28-50 (YSQTLGTTLGALIFSIGIYIFVH), 54-71 (TPLIFGVGVVSGLFWAVG), 84-106 (VSKTMPISTGLQLVSTSLFGVIV), 116-135 (IILGVLALIFIIVGIVLASL), 154-176 (IVILLISTVGYLVYVVVARLFNV), 181-198 (ALLPQAIGMVIGGVLLTF), 211-228 (IIPGLIWAAGNMFLFISQ), 233-255 (VATSFSLSQMGIVISTLGGIIIL), and 262-284 (RQLVGIIIGIILIIIAGVMLGLA).

It belongs to the GRP transporter (TC 2.A.7.5) family.

It localises to the cell membrane. Functionally, involved in the uptake of glucose. The polypeptide is Probable glucose uptake protein GlcU (glcU) (Priestia megaterium (Bacillus megaterium)).